We begin with the raw amino-acid sequence, 185 residues long: Putative manganese efflux pump MntP (185 aa).

The next 6 membrane-spanning stretches (helical) occupy residues 6–26 (IFII…ACGL), 41–61 (FHFG…GLTV), 65–85 (VETY…GKMI), 107–127 (LVFL…SFSI), 132–152 (IAFP…FGLW), and 164–184 (SHIA…KLLL).

This sequence belongs to the MntP (TC 9.B.29) family.

It localises to the cell inner membrane. In terms of biological role, probably functions as a manganese efflux pump. The sequence is that of Putative manganese efflux pump MntP from Maridesulfovibrio salexigens (strain ATCC 14822 / DSM 2638 / NCIMB 8403 / VKM B-1763) (Desulfovibrio salexigens).